A 244-amino-acid polypeptide reads, in one-letter code: T-cell immunoreceptor with Ig and ITIM domains (244 aa).

The N-terminal stretch at 1 to 21 is a signal peptide; sequence MRWCLLLIWAQGLRQAPLASG. Residues 22-124 enclose the Ig-like V-type domain; it reads MMTGTIETTG…DGTYTGRIFL (103 aa). Over 22-141 the chain is Extracellular; it reads MMTGTIETTG…AEHGARFQIP (120 aa). Residues N32 and N101 are each glycosylated (N-linked (GlcNAc...) asparagine). The segment at 32 to 42 is homodimerization; that stretch reads NISAEKGGSII. A disulfide bond links C45 and C108. The helical transmembrane segment at 142–162 threads the bilayer; sequence LLGAMAATLVVICTAVIVVVA. Residues 163–244 are Cytoplasmic-facing; sequence LTRKKKALRI…GNCSFFTETG (82 aa). Y225 carries the post-translational modification Phosphotyrosine. The ITIM motif motif lies at 229–234; that stretch reads LSYRSL.

Homodimer in cis; binds with high affinity to PVR, forming a heterotetrameric assembly of two TIGIT and two PVR molecules. Binds with lower affinity to NECTIN2 and NECTIN3. Interacts with GRB2. Interacts with NECTIN4. In terms of tissue distribution, expressed at low levels on peripheral memory and regulatory CD4+ T-cells and NK cells and is up-regulated following activation of these cells (at protein level).

It is found in the cell membrane. Functionally, inhibitory receptor that plays a role in the modulation of immune responses. Suppresses T-cell activation by promoting the generation of mature immunoregulatory dendritic cells. Upon binding to its ligands PVR/CD155 or NECTIN2/CD112, which are expressed on antigen-presenting cells, sends inhibitory signals to the T-cell or NK cell. Mechanistically, interaction with ligand leads to phosphorylation of the cytoplasmic tail by Src family tyrosine kinases such as FYN or LCK, allowing subsequent binding to adapter GRB2 and SHIP1/INPP5D. In turn, inhibits PI3K and MAPK signaling cascades. In addition, associates with beta-arrestin-2/ARRB2 to recruit SHIP1/INPP5D that suppresses autoubiquitination of TRAF6 and subsequently inhibits NF-kappa-B signaling pathway. Also acts as a receptor for NECTIN4 to inhibit NK cell cytotoxicity. This Homo sapiens (Human) protein is T-cell immunoreceptor with Ig and ITIM domains (TIGIT).